We begin with the raw amino-acid sequence, 211 residues long: Protein CHLORORESPIRATORY REDUCTION 41, chloroplastic (211 aa).

The N-terminal 38 residues, 1–38 (MASTSTLLLPSLSSKNLHIAVPIRTNSFVRRTTKFSTK), are a transit peptide targeting the chloroplast. Residues 136 to 163 (AKAGEIVAERAREEAEVLRDEGKVEERM) adopt a coiled-coil conformation.

In terms of assembly, biogenesis factor component of the plastidial NDH subcomplex A.

The protein localises to the plastid. The protein resides in the chloroplast. It is found in the chloroplast stroma. Required for both formation and activity of the chloroplast NAD(P)H dehydrogenase (NDH) complex of the photosynthetic electron transport chain. Functions in assembly or stabilization of the NDH complex; probably involved, together with NdhO and NdhH, in the formation of an NDH subcomplex A assembly intermediate (NAI500). This Arabidopsis thaliana (Mouse-ear cress) protein is Protein CHLORORESPIRATORY REDUCTION 41, chloroplastic.